A 78-amino-acid polypeptide reads, in one-letter code: Small ribosomal subunit protein bS16c (78 aa).

Belongs to the bacterial ribosomal protein bS16 family.

Its subcellular location is the plastid. The protein localises to the chloroplast. The chain is Small ribosomal subunit protein bS16c from Amborella trichopoda.